The sequence spans 301 residues: GTPase Era (301 aa).

The Era-type G domain maps to 4 to 173 (KAGFVALIGK…LECISKYLSP (170 aa)). A G1 region spans residues 12–19 (GKPNAGKS). Residue 12-19 (GKPNAGKS) coordinates GTP. A G2 region spans residues 38-42 (NATRK). Positions 64–67 (DTPG) are G3. Residues 64 to 68 (DTPGL) and 122 to 125 (SKID) contribute to the GTP site. Residues 122–125 (SKID) are G4. A G5 region spans residues 152–154 (LSA). Residues 204 to 280 (LSDEIPYESD…FLNLQVIAQK (77 aa)) enclose the KH type-2 domain.

This sequence belongs to the TRAFAC class TrmE-Era-EngA-EngB-Septin-like GTPase superfamily. Era GTPase family. As to quaternary structure, monomer.

It localises to the cytoplasm. It is found in the cell inner membrane. In terms of biological role, an essential GTPase that binds both GDP and GTP, with rapid nucleotide exchange. Plays a role in 16S rRNA processing and 30S ribosomal subunit biogenesis and possibly also in cell cycle regulation and energy metabolism. The sequence is that of GTPase Era from Helicobacter pylori (strain G27).